A 193-amino-acid chain; its full sequence is Rho-related GTP-binding protein RhoA-B (193 aa).

Residues 12–19 (GDGACGKT), 30–37 (FPEVYVPT), 59–63 (DTAGQ), 117–120 (NKKD), and 160–162 (SAK) each bind GTP. A (Microbial infection) O-linked (GlcNAc) tyrosine; by Yersinia Afp18 glycan is attached at Tyr34. Cys190 carries the post-translational modification Cysteine methyl ester. Cys190 is lipidated: S-geranylgeranyl cysteine. The propeptide at 191-193 (CLL) is removed in mature form.

The protein belongs to the small GTPase superfamily. Rho family. Post-translationally, (Microbial infection) Glycosylated at Tyr-34 by Yersinia ruckeri toxin Afp18. Mono-O-GlcNAcylation by Afp18 inhibits RhoA activation by guanine nucleotide exchange factors and blocks RhoA signaling.

Its subcellular location is the cell membrane. Its function is as follows. Regulates a signal transduction pathway linking plasma membrane receptors to the assembly of focal adhesions and actin stress fibers. This is Rho-related GTP-binding protein RhoA-B from Danio rerio (Zebrafish).